A 450-amino-acid chain; its full sequence is MHAISSAAPAPSVRLPFYRQLYFQVVFAIIIGVLLGHFQPEYGAAMKPFGDAFIKLIKMIIAPVIFLTIVTGIASMSHLSAVGRVFGKAMAYFLTFSTLALVVGLVVANVMQPGTGMHINVAELDQTAVKGYVSKSHEMTLTGFALDIIPKTLISPFVGDNILQVLLVAVLFGVSLAMVGDAGKPILDFLDGLTKPVFKLVNIVMKAAPIGAFGAMAFTIGKFGLGSLVNLAELVLTFYITSAVFVLVVLGAVARACGFSVLKLIRYLKAELLLVLGTSSSESALPSLMEKMEKAGCSKSVVGLVVPTGYSFNLDGTNIYMTLAALFIAQATDTHLTLGHQIALLLVAMLSSKGAAGVTGAGFITLAATLAVVPEVPVAGMALILGVDRFMSECRSLTNFIGNAVATVVVSRWENALDADRLHRVLDGEAEFLPEPERAVEPVVLARHRA.

8 helical membrane passes run 25-45 (VVFAIIIGVLLGHFQPEYGAA), 56-76 (LIKMIIAPVIFLTIVTGIASM), 90-110 (MAYFLTFSTLALVVGLVVANV), 162-182 (ILQVLLVAVLFGVSLAMVGDA), 200-220 (LVNIVMKAAPIGAFGAMAFTI), 234-254 (LVLTFYITSAVFVLVVLGAVA), 319-339 (IYMTLAALFIAQATDTHLTLG), and 367-387 (AATLAVVPEVPVAGMALILGV).

It belongs to the dicarboxylate/amino acid:cation symporter (DAACS) (TC 2.A.23) family.

The protein localises to the cell inner membrane. Its function is as follows. Responsible for the transport of dicarboxylates such as succinate, fumarate, and malate from the periplasm across the membrane. The sequence is that of C4-dicarboxylate transport protein from Acidovorax ebreus (strain TPSY) (Diaphorobacter sp. (strain TPSY)).